A 1271-amino-acid chain; its full sequence is Chitin synthase 4 (1271 aa).

Disordered regions lie at residues 1–45 (MPPT…SFDH) and 58–117 (PNHP…ERPS). The span at 21-30 (APDTQESSPA) shows a compositional bias: polar residues. Transmembrane regions (helical) follow at residues 165 to 185 (WWIRITWMMTWWIPSFLLVHL) and 201 to 221 (LAIFMMICLACAVVLFYIIFF). Asn407 is a glycosylation site (N-linked (GlcNAc...) asparagine). Residues 473 to 493 (LLLAFSIILIATIASKFLAAL) form a helical membrane-spanning segment. Asn713 and Asn836 each carry an N-linked (GlcNAc...) asparagine glycan. 3 helical membrane passes run 867 to 887 (LLGTIILPATCGYLIYLVIVV), 894 to 914 (IPVISLAMIGATYGLQALIFI), and 919 to 939 (FMLIGWMLVYILAFPVWSVFL). A disordered region spans residues 999–1081 (HSESPAPSEK…DKSFIRGSKP (83 aa)). The span at 1027-1037 (RSPSFHSSASE) shows a compositional bias: polar residues. Residues Asn1055 and Asn1161 are each glycosylated (N-linked (GlcNAc...) asparagine). One can recognise a DEK-C domain in the interval 1213–1269 (EVQDEEVLDKLKTWLSKQDLMSVTKRQTREAIYTLFPNAGLQNRAGWLNEQIDKILS).

This sequence belongs to the chitin synthase family.

Its subcellular location is the cell membrane. It catalyses the reaction [(1-&gt;4)-N-acetyl-beta-D-glucosaminyl](n) + UDP-N-acetyl-alpha-D-glucosamine = [(1-&gt;4)-N-acetyl-beta-D-glucosaminyl](n+1) + UDP + H(+). Polymerizes chitin, a structural polymer of the cell wall and septum, by transferring the sugar moiety of UDP-GlcNAc to the non-reducing end of the growing chitin polymer. Produces a large proportion of the chitin that is not deacetylated to chitosan. The chain is Chitin synthase 4 from Cryptococcus neoformans var. grubii serotype A (strain H99 / ATCC 208821 / CBS 10515 / FGSC 9487) (Filobasidiella neoformans var. grubii).